We begin with the raw amino-acid sequence, 403 residues long: S-adenosylmethionine sensor upstream of mTORC1 (403 aa).

A compositionally biased stretch (gly residues) spans 1-10; the sequence is MEPGPGGRGA. The interval 1-32 is disordered; that stretch reads MEPGPGGRGAARGQRPPNAAQPREQERKLEQE. Residues 11–22 are compositionally biased toward low complexity; it reads ARGQRPPNAAQP. Positions 23–32 are enriched in basic and acidic residues; that stretch reads REQERKLEQE. R93, G170, D188, D200, F201, and S242 together coordinate S-adenosyl-L-methionine.

This sequence belongs to the BMT2/SAMTOR family. As to quaternary structure, interacts with the GATOR1 complex; interaction is disrupted when SAMTOR binds S-adenosyl-L-methionine. Interacts with the KICSTOR complex; interaction is disrupted when SAMTOR binds S-adenosyl-L-methionine.

In terms of biological role, S-adenosyl-L-methionine-binding protein that acts as an inhibitor of mTORC1 signaling via interaction with the GATOR1 and KICSTOR complexes. Acts as a sensor of S-adenosyl-L-methionine to signal methionine sufficiency to mTORC1: in presence of methionine, binds S-adenosyl-L-methionine, leading to disrupt interaction with the GATOR1 and KICSTOR complexes and promote mTORC1 signaling. Upon methionine starvation, S-adenosyl-L-methionine levels are reduced, thereby promoting the association with GATOR1 and KICSTOR, leading to inhibit mTORC1 signaling. Probably also acts as a S-adenosyl-L-methionine-dependent methyltransferase. The protein is S-adenosylmethionine sensor upstream of mTORC1 of Mus musculus (Mouse).